We begin with the raw amino-acid sequence, 251 residues long: MAVHLLIVDALNLIRRIHAVQGSPCVETCQHALDQLIMHSQPTHAVAVFDDENRSSGWRHQRLPDYKAGRPPMQEELHNEMPALRAAFEQRGVPCWSASGNEADDLAATLAVKVTQAGHQATIVSTDKGYCQLLSPTLRIRDYFQKRWLDAPFIDKEFGVQPQQLPDYWGLAGISSSKVPGVAGIGPKSATQLLVEFQSLEGIYENLDAVAEKWRKKLETHKEMAFLCRDIARLQTDLHIDGNLQQLRLVR.

Asp104 is a binding site for Mg(2+). The 5'-3' exonuclease domain occupies 160-249; sequence VQPQQLPDYW…IDGNLQQLRL (90 aa). 5 residues coordinate K(+): Leu171, Ala172, Pro180, Val182, and Ile185. Positions 184–189 are interaction with DNA; the sequence is GIGPKS.

The protein belongs to the Xni family. Requires Mg(2+) as cofactor. K(+) serves as cofactor.

Its function is as follows. Has flap endonuclease activity. During DNA replication, flap endonucleases cleave the 5'-overhanging flap structure that is generated by displacement synthesis when DNA polymerase encounters the 5'-end of a downstream Okazaki fragment. This chain is Flap endonuclease Xni, found in Escherichia coli O7:K1 (strain IAI39 / ExPEC).